The chain runs to 133 residues: ATP synthase epsilon chain (133 aa).

Belongs to the ATPase epsilon chain family. As to quaternary structure, F-type ATPases have 2 components, CF(1) - the catalytic core - and CF(0) - the membrane proton channel. CF(1) has five subunits: alpha(3), beta(3), gamma(1), delta(1), epsilon(1). CF(0) has three main subunits: a, b and c.

The protein localises to the cell membrane. In terms of biological role, produces ATP from ADP in the presence of a proton gradient across the membrane. In Clostridium botulinum (strain Langeland / NCTC 10281 / Type F), this protein is ATP synthase epsilon chain.